The chain runs to 753 residues: Neuroendocrine convertase 1 (753 aa).

Positions 1–27 (MEQRGWTLQCTAFAFFCVWCALNSVKA) are cleaved as a signal peptide. A propeptide spanning residues 28–110 (KRQFVNEWAA…QQYEKERSKR (83 aa)) is cleaved from the precursor. The 322-residue stretch at 129 to 450 (QWYLQDTRMT…FGLLNAKALV (322 aa)) folds into the Peptidase S8 domain. Active-site charge relay system residues include D167 and H208. 2 disulfide bridges follow: C225–C374 and C317–C347. S382 acts as the Charge relay system in catalysis. N401 is a glycosylation site (N-linked (GlcNAc...) asparagine). The 138-residue stretch at 460–597 (NVPEKKECVV…KLILHGTSSQ (138 aa)) folds into the P/Homo B domain. An intrachain disulfide couples C467 to C494. Over residues 633 to 651 (QKSLNGNLLVPKNSSSSNV) the composition is skewed to polar residues. Positions 633–663 (QKSLNGNLLVPKNSSSSNVEGRRDEQVQGTP) are disordered. The N-linked (GlcNAc...) asparagine glycan is linked to N645.

The protein belongs to the peptidase S8 family. Furin subfamily. The cofactor is Ca(2+).

It is found in the cytoplasmic vesicle. It localises to the secretory vesicle. It catalyses the reaction Release of protein hormones, neuropeptides and renin from their precursors, generally by hydrolysis of -Lys-Arg-|- bonds.. Functionally, involved in the processing of hormone and other protein precursors at sites comprised of pairs of basic amino acid residues. Substrates include POMC, renin, enkephalin, dynorphin, somatostatin, insulin and AGRP. The polypeptide is Neuroendocrine convertase 1 (Pcsk1) (Mus musculus (Mouse)).